The following is a 252-amino-acid chain: Homeobox protein EMX2 (252 aa).

Positions 154–213 (PKRIRTAFSPSQLLRLEHAFEKNHYVVGAERKQLAHSLSLTETQVKVWFQNRRTKFKRQK) form a DNA-binding region, homeobox. Residues 212-252 (QKLEEEGSDSQQKKKGTHHINRWRIATKQASPEEIDVTSDD) form a disordered region. Over residues 224 to 233 (KKKGTHHINR) the composition is skewed to basic residues.

This sequence belongs to the EMX homeobox family. In terms of assembly, interacts with translation initiation factor EIF4E. In terms of tissue distribution, cerebral cortex.

It is found in the nucleus. It localises to the cell projection. The protein localises to the axon. In terms of biological role, transcription factor, which in cooperation with EMX1, acts to generate the boundary between the roof and archipallium in the developing brain. May function in combination with OTX1/2 to specify cell fates in the developing central nervous system. In the inner ear, it controls the distribution of GPR156 at hair cell boundaries, and regulates the organization of stereociliary bundles in opposite orientations across the line of polarity reversal (LPR). The protein is Homeobox protein EMX2 (EMX2) of Homo sapiens (Human).